A 331-amino-acid chain; its full sequence is Tetraacyldisaccharide 4'-kinase (331 aa).

60–67 (TVGGTGKT) lines the ATP pocket.

It belongs to the LpxK family.

It catalyses the reaction a lipid A disaccharide + ATP = a lipid IVA + ADP + H(+). Its pathway is glycolipid biosynthesis; lipid IV(A) biosynthesis; lipid IV(A) from (3R)-3-hydroxytetradecanoyl-[acyl-carrier-protein] and UDP-N-acetyl-alpha-D-glucosamine: step 6/6. Transfers the gamma-phosphate of ATP to the 4'-position of a tetraacyldisaccharide 1-phosphate intermediate (termed DS-1-P) to form tetraacyldisaccharide 1,4'-bis-phosphate (lipid IVA). The protein is Tetraacyldisaccharide 4'-kinase of Pseudomonas syringae pv. syringae (strain B728a).